The sequence spans 115 residues: uncharacterized protein (115 aa).

Residues 1 to 115 (MGVEISLDPP…ETVIKLSAAE (115 aa)) form the MSP domain.

This is an uncharacterized protein from Caenorhabditis elegans.